Here is a 182-residue protein sequence, read N- to C-terminus: NADH-quinone oxidoreductase subunit I (182 aa).

2 consecutive 4Fe-4S ferredoxin-type domains span residues L52–A82 and D92–D121. Residues C62, C65, C68, C72, C101, C104, C107, and C111 each contribute to the [4Fe-4S] cluster site.

This sequence belongs to the complex I 23 kDa subunit family. As to quaternary structure, NDH-1 is composed of 13 different subunits. Subunits NuoA, H, J, K, L, M, N constitute the membrane sector of the complex. It depends on [4Fe-4S] cluster as a cofactor.

It localises to the cell inner membrane. It catalyses the reaction a quinone + NADH + 5 H(+)(in) = a quinol + NAD(+) + 4 H(+)(out). Functionally, NDH-1 shuttles electrons from NADH, via FMN and iron-sulfur (Fe-S) centers, to quinones in the respiratory chain. The immediate electron acceptor for the enzyme in this species is believed to be ubiquinone. Couples the redox reaction to proton translocation (for every two electrons transferred, four hydrogen ions are translocated across the cytoplasmic membrane), and thus conserves the redox energy in a proton gradient. The polypeptide is NADH-quinone oxidoreductase subunit I (Pseudomonas savastanoi pv. phaseolicola (strain 1448A / Race 6) (Pseudomonas syringae pv. phaseolicola (strain 1448A / Race 6))).